A 325-amino-acid polypeptide reads, in one-letter code: NADH-quinone oxidoreductase subunit H (325 aa).

9 helical membrane passes run 11–31 (ILLSILKAVVILLVVVTCGAF), 50–69 (NRVGWGGSLQLVADMIKMFF), 81–101 (VIFTLAPMIAFTSLLLSFAIV), 114–134 (IGILFFLMMAGLAVYAVLFAG), 154–174 (VSYEVFLGLSLMGVVAQAGSF), 186–206 (LWNVIPQFFGFVTFAIAGVAV), 237–257 (FFVGEYIGIVTVSALMVTLFF), 265–285 (LPPFVWFALKTAFFMMMFILI), and 304–324 (VCLPLTLINLLVTAAVILWQA).

Belongs to the complex I subunit 1 family. NDH-1 is composed of 13 different subunits. Subunits NuoA, H, J, K, L, M, N constitute the membrane sector of the complex.

It is found in the cell inner membrane. It catalyses the reaction a quinone + NADH + 5 H(+)(in) = a quinol + NAD(+) + 4 H(+)(out). Functionally, NDH-1 shuttles electrons from NADH, via FMN and iron-sulfur (Fe-S) centers, to quinones in the respiratory chain. The immediate electron acceptor for the enzyme in this species is believed to be ubiquinone. Couples the redox reaction to proton translocation (for every two electrons transferred, four hydrogen ions are translocated across the cytoplasmic membrane), and thus conserves the redox energy in a proton gradient. This subunit may bind ubiquinone. The chain is NADH-quinone oxidoreductase subunit H from Salmonella agona (strain SL483).